Here is a 94-residue protein sequence, read N- to C-terminus: Co-chaperonin GroES (94 aa).

This sequence belongs to the GroES chaperonin family. In terms of assembly, heptamer of 7 subunits arranged in a ring. Interacts with the chaperonin GroEL.

The protein localises to the cytoplasm. Together with the chaperonin GroEL, plays an essential role in assisting protein folding. The GroEL-GroES system forms a nano-cage that allows encapsulation of the non-native substrate proteins and provides a physical environment optimized to promote and accelerate protein folding. GroES binds to the apical surface of the GroEL ring, thereby capping the opening of the GroEL channel. This chain is Co-chaperonin GroES, found in Enterococcus faecalis (strain ATCC 700802 / V583).